The chain runs to 678 residues: UvrABC system protein B (678 aa).

The Helicase ATP-binding domain maps to 35-422 (EGVSDGLMFQ…ADNVVEQVVR (388 aa)). 48 to 55 (GVTGSGKT) provides a ligand contact to ATP. Residues 101 to 124 (YYDYYQPEAYVPTRDLFIEKDSSI) carry the Beta-hairpin motif. Positions 439–605 (QVDDLLGEIH…GVSKAVRELI (167 aa)) constitute a Helicase C-terminal domain. Residues 633 to 668 (AREIRRLEKLMMDHARNLEFEQAAAARDALNALKSR) enclose the UVR domain.

Belongs to the UvrB family. In terms of assembly, forms a heterotetramer with UvrA during the search for lesions. Interacts with UvrC in an incision complex.

It localises to the cytoplasm. In terms of biological role, the UvrABC repair system catalyzes the recognition and processing of DNA lesions. A damage recognition complex composed of 2 UvrA and 2 UvrB subunits scans DNA for abnormalities. Upon binding of the UvrA(2)B(2) complex to a putative damaged site, the DNA wraps around one UvrB monomer. DNA wrap is dependent on ATP binding by UvrB and probably causes local melting of the DNA helix, facilitating insertion of UvrB beta-hairpin between the DNA strands. Then UvrB probes one DNA strand for the presence of a lesion. If a lesion is found the UvrA subunits dissociate and the UvrB-DNA preincision complex is formed. This complex is subsequently bound by UvrC and the second UvrB is released. If no lesion is found, the DNA wraps around the other UvrB subunit that will check the other stand for damage. This is UvrABC system protein B from Bordetella pertussis (strain Tohama I / ATCC BAA-589 / NCTC 13251).